Consider the following 593-residue polypeptide: Cell surface glycoprotein (593 aa).

The N-terminal stretch at methionine 1–alanine 22 is a signal peptide. Residues asparagine 29, asparagine 58, asparagine 66, asparagine 74, asparagine 114, asparagine 122, asparagine 145, asparagine 148, asparagine 158, asparagine 176, asparagine 208, asparagine 231, asparagine 326, asparagine 336, asparagine 340, asparagine 431, asparagine 471, asparagine 500, and asparagine 516 are each glycosylated (N-linked (GalNAc...) asparagine).

Post-translationally, N-glycosylated; contains glycans composed of methyl-Man, Man and GalNAc residues in a molar ratio of 2:3:1.

The protein resides in the secreted. It is found in the cell wall. Its subcellular location is the S-layer. Functionally, the S-layer is a paracrystalline mono-layered assembly of proteins which coat the surface of the cell. The sequence is that of Cell surface glycoprotein (slgA) from Methanothermus fervidus (strain ATCC 43054 / DSM 2088 / JCM 10308 / V24 S).